The sequence spans 332 residues: Large ribosomal subunit protein mL44 (332 aa).

The transit peptide at 1–30 (MASGLTRLLLRGPRCLLATAGLTLIPPVRG) directs the protein to the mitochondrion. The 143-residue stretch at 86–228 (DLLKTAFVNS…LITQMTGKEL (143 aa)) folds into the RNase III domain. The 71-residue stretch at 236–306 (NPMGLLVQEL…ARVALRKLYG (71 aa)) folds into the DRBM domain.

The protein belongs to the ribonuclease III family. Mitochondrion-specific ribosomal protein mL44 subfamily. In terms of assembly, component of the mitochondrial ribosome large subunit (39S) which comprises a 16S rRNA and about 50 distinct proteins.

The protein localises to the mitochondrion. Component of the 39S subunit of mitochondrial ribosome. May have a function in the assembly/stability of nascent mitochondrial polypeptides exiting the ribosome. In Bos taurus (Bovine), this protein is Large ribosomal subunit protein mL44 (MRPL44).